Here is a 145-residue protein sequence, read N- to C-terminus: Transmembrane protein 216 (145 aa).

The next 4 membrane-spanning stretches (helical) occupy residues 22–42, 56–76, 89–109, and 122–142; these read ILFFLNGWYNATYFLLELFIF, LVLDVVMLLLYLGIEVIRLFF, LSISVALTFPSAMMASYYLLL, and GILLFFCGSELLLEVLTLAAF.

In terms of assembly, part of the tectonic-like complex (also named B9 complex). Interacts with TMEM107.

The protein localises to the membrane. The protein resides in the cytoplasm. Its subcellular location is the cytoskeleton. It is found in the cilium basal body. Functionally, part of the tectonic-like complex which is required for tissue-specific ciliogenesis and may regulate ciliary membrane composition. The polypeptide is Transmembrane protein 216 (TMEM216) (Homo sapiens (Human)).